Consider the following 355-residue polypeptide: Squamosa promoter-binding protein-like 15 (355 aa).

The segment at 1-27 is disordered; sequence MELLKGSGLNQTESGGSSSTESSSLSG. Residues 12-27 are compositionally biased toward low complexity; that stretch reads TESGGSSSTESSSLSG. Residues 61-138 form an SBP-type zinc finger; that stretch reads TARCQVEGCR…ACHNERRRKP (78 aa). Positions 64, 69, 86, 89, 105, 108, 112, and 124 each coordinate Zn(2+). The Bipartite nuclear localization signal motif lies at 121 to 137; it reads KRSCRRRLACHNERRRK.

Its subcellular location is the nucleus. Its function is as follows. Probable transcription factor required for the flowering response to vernalization in the shoot apical meristem (SAM). Defines the competence of shoot meristems to flower in response to vernalization in perennials. In Arabis alpina (Alpine rock-cress), this protein is Squamosa promoter-binding protein-like 15.